The sequence spans 519 residues: UPF0053 protein bbp_300 (519 aa).

The next 7 helical transmembrane spans lie at 13–35, 48–70, 80–102, 123–145, 150–172, 185–207, and 212–231; these read LLTL…AILS, LIGL…WMVT, YFSF…FKAT, AGFW…DAII, TINN…LIAS, VVVL…ALGF, and GYLY…NQIA. CBS domains lie at 311–373 and 374–434; these read MTPR…IIDF and SSTT…DADE.

This sequence belongs to the UPF0053 family.

It localises to the cell membrane. This Buchnera aphidicola subsp. Baizongia pistaciae (strain Bp) protein is UPF0053 protein bbp_300.